Consider the following 343-residue polypeptide: Glucokinase (343 aa).

18-23 (GDIGGT) lines the ATP pocket.

Belongs to the bacterial glucokinase family.

It is found in the cytoplasm. The enzyme catalyses D-glucose + ATP = D-glucose 6-phosphate + ADP + H(+). In Brucella suis biovar 1 (strain 1330), this protein is Glucokinase.